A 64-amino-acid polypeptide reads, in one-letter code: Large ribosomal subunit protein bL28 (64 aa).

A disordered region spans residues 1–27; the sequence is MAKRDQLTGKGPLSGNTRSHAMNHSKR.

It belongs to the bacterial ribosomal protein bL28 family.

In Ureaplasma parvum serovar 3 (strain ATCC 27815 / 27 / NCTC 11736), this protein is Large ribosomal subunit protein bL28.